Consider the following 162-residue polypeptide: Phosphopantetheine adenylyltransferase (162 aa).

Ser9 is a binding site for substrate. Residues 9-10 (SF) and His17 each bind ATP. Substrate is bound by residues Lys41, Leu73, and Lys87. Residues 88–90 (GLR), Glu98, and 123–129 (YAHLSSS) each bind ATP.

Belongs to the bacterial CoaD family. As to quaternary structure, homohexamer. Requires Mg(2+) as cofactor.

It is found in the cytoplasm. It catalyses the reaction (R)-4'-phosphopantetheine + ATP + H(+) = 3'-dephospho-CoA + diphosphate. Its pathway is cofactor biosynthesis; coenzyme A biosynthesis; CoA from (R)-pantothenate: step 4/5. Functionally, reversibly transfers an adenylyl group from ATP to 4'-phosphopantetheine, yielding dephospho-CoA (dPCoA) and pyrophosphate. The polypeptide is Phosphopantetheine adenylyltransferase (Symbiobacterium thermophilum (strain DSM 24528 / JCM 14929 / IAM 14863 / T)).